A 207-amino-acid polypeptide reads, in one-letter code: Ribosomal RNA small subunit methyltransferase G (207 aa).

S-adenosyl-L-methionine contacts are provided by residues glycine 77, phenylalanine 82, 100–102 (ERS), and arginine 141.

Belongs to the methyltransferase superfamily. RNA methyltransferase RsmG family.

The protein localises to the cytoplasm. Its function is as follows. Specifically methylates the N7 position of a guanine in 16S rRNA. This is Ribosomal RNA small subunit methyltransferase G from Borrelia hermsii (strain HS1 / DAH).